Reading from the N-terminus, the 283-residue chain is Formamidopyrimidine-DNA glycosylase (283 aa).

The Schiff-base intermediate with DNA role is filled by proline 2. Glutamate 3 functions as the Proton donor in the catalytic mechanism. The active-site Proton donor; for beta-elimination activity is lysine 60. DNA is bound by residues histidine 100, arginine 119, and arginine 164. An FPG-type zinc finger spans residues 249 to 283 (WVYNRAGEPCKVCGDVIQRIKLGGRSSHFCRQCQV). Arginine 273 acts as the Proton donor; for delta-elimination activity in catalysis.

Belongs to the FPG family. In terms of assembly, monomer. Zn(2+) serves as cofactor.

The catalysed reaction is Hydrolysis of DNA containing ring-opened 7-methylguanine residues, releasing 2,6-diamino-4-hydroxy-5-(N-methyl)formamidopyrimidine.. It carries out the reaction 2'-deoxyribonucleotide-(2'-deoxyribose 5'-phosphate)-2'-deoxyribonucleotide-DNA = a 3'-end 2'-deoxyribonucleotide-(2,3-dehydro-2,3-deoxyribose 5'-phosphate)-DNA + a 5'-end 5'-phospho-2'-deoxyribonucleoside-DNA + H(+). In terms of biological role, involved in base excision repair of DNA damaged by oxidation or by mutagenic agents. Acts as a DNA glycosylase that recognizes and removes damaged bases. Has a preference for oxidized purines, such as 7,8-dihydro-8-oxoguanine (8-oxoG). Has AP (apurinic/apyrimidinic) lyase activity and introduces nicks in the DNA strand. Cleaves the DNA backbone by beta-delta elimination to generate a single-strand break at the site of the removed base with both 3'- and 5'-phosphates. The chain is Formamidopyrimidine-DNA glycosylase from Nostoc sp. (strain PCC 7120 / SAG 25.82 / UTEX 2576).